Reading from the N-terminus, the 115-residue chain is Macrophage migration inhibitory factor (115 aa).

Pro2 (proton acceptor; via imino nitrogen) is an active-site residue. Residues Lys33 and Ile65 each contribute to the substrate site. Lys78 carries the N6-acetyllysine; alternate modification. At Lys78 the chain carries N6-succinyllysine; alternate. A substrate-binding site is contributed by Asn98.

Belongs to the MIF family. Homotrimer. Interacts with CXCR2 extracellular domain. Interacts with the CD74 extracellular domain, USO1, COPS5 and BNIPL. As to expression, expressed in a wide variety of organs including brain, spleen, liver, muscle and kidney.

Its subcellular location is the secreted. It is found in the cytoplasm. It catalyses the reaction 3-phenylpyruvate = enol-phenylpyruvate. The catalysed reaction is L-dopachrome = 5,6-dihydroxyindole-2-carboxylate. Pro-inflammatory cytokine involved in the innate immune response to bacterial pathogens. The expression of MIF at sites of inflammation suggests a role as mediator in regulating the function of macrophages in host defense. Counteracts the anti-inflammatory activity of glucocorticoids. Has phenylpyruvate tautomerase and dopachrome tautomerase activity (in vitro), but the physiological substrate is not known. It is not clear whether the tautomerase activity has any physiological relevance, and whether it is important for cytokine activity. This Rattus norvegicus (Rat) protein is Macrophage migration inhibitory factor (Mif).